The chain runs to 289 residues: D-psicose 3-epimerase (289 aa).

Residues Tyr-6 and Ala-107 each coordinate substrate. Glu-150 (proton donor/acceptor) is an active-site residue. A Mn(2+)-binding site is contributed by Glu-150. Residues Glu-156 and 183–186 contribute to the substrate site; that span reads DTFH. Mn(2+) is bound by residues Asp-183 and His-209. Arg-215 serves as a coordination point for substrate. The active-site Proton donor/acceptor is Glu-244. Residue Glu-244 participates in Mn(2+) binding.

It belongs to the hyi family. In terms of assembly, homotetramer. Mn(2+) is required as a cofactor. The cofactor is Co(2+).

The enzyme catalyses D-allulose = keto-D-fructose. Its activity is regulated as follows. Inhibited by Zn(2+) and Cu(2+). Its function is as follows. Involved in the biosynthesis of D-psicose. Catalyzes the reversible epimerization of D-fructose at the C3 position to yield D-psicose. The enzyme is highly specific for D-psicose and shows very low activity with D-tagatose. The substrate specificity decreases in the following order: D-fructose, D-tagatose, D-ribulose, D-xylulose, and D-sorbose. It shows a higher level of activity for cis ketoses than for trans-ketoses. In Agrobacterium fabrum (strain C58 / ATCC 33970) (Agrobacterium tumefaciens (strain C58)), this protein is D-psicose 3-epimerase (dpe).